Reading from the N-terminus, the 378-residue chain is Alginate lyase (378 aa).

The signal sequence occupies residues 1–28 (MQTPKLIRPTLLSMAIVSSMAWATGASA). Residues 67–68 (SK), 140–141 (HT), and Y258 contribute to the substrate site.

It belongs to the polysaccharide lyase 5 family.

The protein resides in the periplasm. The enzyme catalyses Eliminative cleavage of alginate to give oligosaccharides with 4-deoxy-alpha-L-erythro-hex-4-enuronosyl groups at their non-reducing ends and beta-D-mannuronate at their reducing end.. Catalyzes the depolymerization of alginate by cleaving the beta-1,4 glycosidic bond between two adjacent sugar residues via a beta-elimination mechanism. May serve to degrade mislocalized alginate that is trapped in the periplasmic space. This is Alginate lyase from Pseudomonas syringae pv. tomato (strain ATCC BAA-871 / DC3000).